The chain runs to 268 residues: Hemolysin C (268 aa).

2 CBS domains span residues 52 to 111 (MVPR…NFSL) and 114 to 171 (ILHK…IRDE).

This sequence belongs to the UPF0053 family.

Its function is as follows. Bacterial hemolysins are exotoxins that attack blood cell membranes and cause cell rupture by mechanisms not clearly defined. This Brachyspira hyodysenteriae (Treponema hyodysenteriae) protein is Hemolysin C (tlyC).